The following is a 302-amino-acid chain: MRADPAQCRLRQTGDVDPADGDGRRCHRRSPAYCGVRSGPGGCRHRYLISSLVSACLGFYYVHRVAHLTCRVSLKNLSGDIRNIGRTALPAVIGNLATPVGMAYVMAAMAPFGSQALATIGVIDRVIQVAFCVVFALPGALIPILGQNLGAMNTARVSQAIKMTYGLLIGYGSVTSLLLILLAEPLASLFHLAAERQVVFFAFCRWGGALDAHRAAIHCHLSLPQYGATGVRHTVRLVPRHLGTMPFVWYGAHKFGSVGVMLGQLLGNTIVAFCACVARASAHEKDVGHRDPFNREPIPPQE.

In terms of biological role, may be a membrane-bound protein, possibly involved in IAA or IAA-Lysine transport. This is an uncharacterized protein from Pseudomonas savastanoi (Pseudomonas syringae pv. savastanoi).